A 325-amino-acid polypeptide reads, in one-letter code: Probable 4-hydroxy-tetrahydrodipicolinate reductase 2, chloroplastic (325 aa).

A chloroplast-targeting transit peptide spans 1–32; that stretch reads MLSLRPPCTLSPAPWRRRRTLHGAAGTPQRVS. NAD(+)-binding positions include 57-62, 149-151, and 172-175; these read GCTGKM, GTT, and SPQM. The Proton donor/acceptor role is filled by His208. Lys212 acts as the Proton donor in catalysis. 217–218 serves as a coordination point for (S)-2,3,4,5-tetrahydrodipicolinate; the sequence is GT.

This sequence belongs to the DapB family.

It localises to the plastid. Its subcellular location is the chloroplast. The catalysed reaction is (S)-2,3,4,5-tetrahydrodipicolinate + NAD(+) + H2O = (2S,4S)-4-hydroxy-2,3,4,5-tetrahydrodipicolinate + NADH + H(+). The enzyme catalyses (S)-2,3,4,5-tetrahydrodipicolinate + NADP(+) + H2O = (2S,4S)-4-hydroxy-2,3,4,5-tetrahydrodipicolinate + NADPH + H(+). It functions in the pathway amino-acid biosynthesis; L-lysine biosynthesis via DAP pathway; (S)-tetrahydrodipicolinate from L-aspartate: step 4/4. Catalyzes the conversion of 4-hydroxy-tetrahydrodipicolinate (HTPA) to tetrahydrodipicolinate. This chain is Probable 4-hydroxy-tetrahydrodipicolinate reductase 2, chloroplastic (DAPB2), found in Oryza sativa subsp. japonica (Rice).